A 329-amino-acid chain; its full sequence is Ephrin-B1 (329 aa).

Residues 1 to 20 (MEGLRRLLGLLLVLYRLCSA) form the signal peptide. The Extracellular segment spans residues 21–226 (LGKNLEPVTW…FFNSKIAVFA (206 aa)). Positions 23 to 157 (KNLEPVTWNS…TRSMKIIMKV (135 aa)) constitute an Ephrin RBD domain. 2 cysteine pairs are disulfide-bonded: Cys57–Cys94 and Cys82–Cys146. Asn132 carries N-linked (GlcNAc...) asparagine glycosylation. Residues 163–192 (AVPPEQLTTTRPSKEADNTGKIATFGPWNG) are disordered. A glycan (N-linked (GlcNAc...) asparagine) is linked at Asn203. Residues 227–247 (AIGAGCVIFILIIIFLVVLLI) traverse the membrane as a helical segment. The Cytoplasmic portion of the chain corresponds to 248–329 (KIRKRHRKHT…QSPANIYYKV (82 aa)). A PDZ-binding motif is present at residues 327–329 (YKV).

It belongs to the ephrin family. In terms of assembly, interacts with TLE4 through the PDZ-binding motif. Post-translationally, inducible phosphorylation of tyrosine residues in the cytoplasmic domain. Tyrosine phosphorylation inhibits TLE4-binding. As to expression, expressed at low levels in most tissues with highest levels in the kidney, oocytes, ovary and testis.

The protein localises to the membrane. Its function is as follows. Cell surface transmembrane ligand for Eph receptors, a family of receptor tyrosine kinases which are crucial for migration, repulsion and adhesion during neuronal, vascular and epithelial development. Binds promiscuously Eph receptors residing on adjacent cells, leading to contact-dependent bidirectional signaling into neighboring cells. The signaling pathway downstream of the receptor is referred to as forward signaling while the signaling pathway downstream of the ephrin ligand is referred to as reverse signaling. May have a role in the developing mesenchymal and nervous tissue. This Xenopus laevis (African clawed frog) protein is Ephrin-B1 (efnb1).